Consider the following 261-residue polypeptide: Ethanolamine ammonia-lyase small subunit (261 aa).

Residues Val-158, Glu-179, and Cys-208 each coordinate adenosylcob(III)alamin.

Belongs to the EutC family. The basic unit is a heterodimer which dimerizes to form tetramers. The heterotetramers trimerize; 6 large subunits form a core ring with 6 small subunits projecting outwards. Requires adenosylcob(III)alamin as cofactor.

It localises to the bacterial microcompartment. The catalysed reaction is ethanolamine = acetaldehyde + NH4(+). It functions in the pathway amine and polyamine degradation; ethanolamine degradation. Catalyzes the deamination of various vicinal amino-alcohols to oxo compounds. Allows this organism to utilize ethanolamine as the sole source of nitrogen and carbon in the presence of external vitamin B12. This is Ethanolamine ammonia-lyase small subunit from Bradyrhizobium diazoefficiens (strain JCM 10833 / BCRC 13528 / IAM 13628 / NBRC 14792 / USDA 110).